A 272-amino-acid polypeptide reads, in one-letter code: Elongation factor Ts (272 aa).

The interval 86–89 (TDFV) is involved in Mg(2+) ion dislocation from EF-Tu.

This sequence belongs to the EF-Ts family.

The protein resides in the cytoplasm. Associates with the EF-Tu.GDP complex and induces the exchange of GDP to GTP. It remains bound to the aminoacyl-tRNA.EF-Tu.GTP complex up to the GTP hydrolysis stage on the ribosome. This is Elongation factor Ts from Blochmanniella pennsylvanica (strain BPEN).